Consider the following 316-residue polypeptide: Myb-related protein 306 (316 aa).

HTH myb-type domains lie at lysine 9 to isoleucine 65 and lysine 66 to leucine 116. DNA-binding regions (H-T-H motif) lie at residues tryptophan 37–leucine 61 and tryptophan 89–leucine 112. Disordered stretches follow at residues leucine 119–glutamine 144, lysine 168–threonine 193, and lysine 209–serine 230. A compositionally biased stretch (basic and acidic residues) spans aspartate 135–glutamine 144. Over residues valine 181 to threonine 193 the composition is skewed to polar residues. Low complexity predominate over residues serine 216–serine 230.

Expressed in flowers, leaves and weakly in seed pods.

The protein localises to the nucleus. In terms of biological role, transcription factor. The chain is Myb-related protein 306 from Antirrhinum majus (Garden snapdragon).